The following is a 234-amino-acid chain: MAALLFYISAIFVPEAIWLLWSFPHWETMHVWNSLSEIPTAYVTAFISGDALLAVIGFWVAAKLIRSGRDYAAHIQWIAGYFAFFFVLAHGWDGTGWQRFTWDPTVTGMPWEPGRTMWVDFATSNVAITLYAMALPTIVPMIAGGYIWLRNGHILAGLDGARASSLAVKGVAIYLLGVFVAFLMAACATVISLHLTTQAGMLVGVIVTITVAYALAFRRGGILQTAISRGFNLT.

6 consecutive transmembrane segments (helical) span residues 5–23, 38–60, 73–92, 127–149, 170–192, and 197–217; these read LFYI…LWSF, IPTA…GFWV, AHIQ…AHGW, AITL…YIWL, GVAI…TVIS, and TQAG…ALAF.

Its subcellular location is the cell membrane. This is an uncharacterized protein from Archaeoglobus fulgidus (strain ATCC 49558 / DSM 4304 / JCM 9628 / NBRC 100126 / VC-16).